Reading from the N-terminus, the 578-residue chain is MAVRWTWAGKSCLLLALLTLAYILVEFSVSTLYASPGAGGARELGPRRLPDLDTREEDLSQPLYIKPPADSHALGEWGRASKLQLNEGELKQQEELIERYAINIYLSDRISLHRHIEDKRMYECKAKKFHYRSLPTTSVIIAFYNEAWSTLLRTIHSVLETSPAVLLKEIILVDDLSDRIYLKAQLETYISNLERVRLIRTNKREGLVRARLIGATFATGDVLTFLDCHCECNTGWLEPLLERISRDETAIVCPVIDTIDWNTFEFYMQTGEPMIGGFDWRLTFQWHSVPKHERDRRTSRIDPIRSPTMAGGLFAVSKKYFQYLGTYDTGMEVWGGENLELSFRVWQCGGKLEIHPCSHVGHVFPKRAPYARPNFLQNTARAAEVWMDEYKEHFYNRNPPARKEAYGDLSERKLLRERLKCKSFDWYLKNVFSNLHVPEDRPGWHGAIRSMGISSECLDYNAPDNNPTGANLSLFGCHGQGGNQFFEYTSNKEIRFNSVTELCAEVPQQKDYVGMQNCPKDGLPVPVNIIWHFKEDGTIFHPHTRLCLSAYRTAEGRPSVHMKTCDALDKNQLWRFEK.

The Cytoplasmic segment spans residues 1-12; it reads MAVRWTWAGKSC. Residues 13 to 35 form a helical; Signal-anchor for type II membrane protein membrane-spanning segment; the sequence is LLLALLTLAYILVEFSVSTLYAS. Residues 36–578 are Lumenal-facing; the sequence is PGAGGARELG…DKNQLWRFEK (543 aa). 5 disulfides stabilise this stretch: C124/C357, C348/C421, C457/C477, C503/C518, and C547/C565. The segment at 134-243 is catalytic subdomain A; it reads LPTTSVIIAF…TGWLEPLLER (110 aa). Substrate is bound by residues D175 and R204. D227 and H229 together coordinate Mn(2+). The catalytic subdomain B stretch occupies residues 303–365; the sequence is PIRSPTMAGG…PCSHVGHVFP (63 aa). W334 provides a ligand contact to substrate. Residue H362 coordinates Mn(2+). Y370 serves as a coordination point for substrate. Residues 444–577 enclose the Ricin B-type lectin domain; the sequence is WHGAIRSMGI…LDKNQLWRFE (134 aa). The N-linked (GlcNAc...) asparagine glycan is linked to N471.

It belongs to the glycosyltransferase 2 family. GalNAc-T subfamily. It depends on Mn(2+) as a cofactor. As to expression, highly expressed in sublingual gland, stomach, colon, small intestine and cervix. Expressed at intermediate levels in kidney, ovary, lung and uterus. Weakly expressed in spleen, liver, heart and brain. Not expressed in submandibular and parotid glands, skeletal muscle and testis.

It is found in the golgi apparatus membrane. The enzyme catalyses L-seryl-[protein] + UDP-N-acetyl-alpha-D-galactosamine = a 3-O-[N-acetyl-alpha-D-galactosaminyl]-L-seryl-[protein] + UDP + H(+). It carries out the reaction L-threonyl-[protein] + UDP-N-acetyl-alpha-D-galactosamine = a 3-O-[N-acetyl-alpha-D-galactosaminyl]-L-threonyl-[protein] + UDP + H(+). It participates in protein modification; protein glycosylation. Its function is as follows. Catalyzes the initial reaction in O-linked oligosaccharide biosynthesis, the transfer of an N-acetyl-D-galactosamine residue to a serine or threonine residue on the protein receptor. Has a highest activity toward EA2 peptide substrate and a much lower activity with EPO-T, Muc2, Muc1a, Muc1b. The sequence is that of Polypeptide N-acetylgalactosaminyltransferase 4 (Galnt4) from Mus musculus (Mouse).